Here is a 235-residue protein sequence, read N- to C-terminus: Glycerol-3-phosphate acyltransferase (235 aa).

6 helical membrane passes run 4-24 (LLAI…IMAG), 56-76 (TVTL…VAFF), 94-114 (LLAG…GFKG), 126-146 (IGIA…TVWF), 152-172 (VASI…KYVF), and 194-214 (SLDY…LFTH).

It belongs to the PlsY family. In terms of assembly, probably interacts with PlsX.

The protein localises to the cell inner membrane. It catalyses the reaction an acyl phosphate + sn-glycerol 3-phosphate = a 1-acyl-sn-glycero-3-phosphate + phosphate. Its pathway is lipid metabolism; phospholipid metabolism. Catalyzes the transfer of an acyl group from acyl-phosphate (acyl-PO(4)) to glycerol-3-phosphate (G3P) to form lysophosphatidic acid (LPA). This enzyme utilizes acyl-phosphate as fatty acyl donor, but not acyl-CoA or acyl-ACP. The protein is Glycerol-3-phosphate acyltransferase of Chlorobium phaeovibrioides (strain DSM 265 / 1930) (Prosthecochloris vibrioformis (strain DSM 265)).